Here is a 458-residue protein sequence, read N- to C-terminus: Serine protease Do-like HtrB (458 aa).

The span at Met-1–His-18 shows a compositional bias: basic and acidic residues. The disordered stretch occupies residues Met-1–Val-42. Residues Met-1–Arg-71 lie on the Cytoplasmic side of the membrane. Residues Ala-72 to Ala-92 traverse the membrane as a helical segment. Over Pro-93–Ser-458 the chain is Extracellular. Positions Gln-146–Gly-170 are disordered. Catalysis depends on charge relay system residues His-187, Asp-217, and Ser-298. Substrate contacts are provided by residues Gly-296–Ser-298 and Leu-352–Met-356. A PDZ domain is found at Met-356–Gly-440.

Belongs to the peptidase S1C family.

It is found in the cell membrane. It carries out the reaction Acts on substrates that are at least partially unfolded. The cleavage site P1 residue is normally between a pair of hydrophobic residues, such as Val-|-Val.. In terms of biological role, degrades abnormal exported proteins and responsible for the propeptide processing of a natural pro-protein and for the maturation of a native protein. It also plays a prominent role in stress (heat shock, ethanol, puromycin and NaCl) resistance during active exponential growth. In Bacillus subtilis (strain 168), this protein is Serine protease Do-like HtrB (htrB).